A 200-amino-acid chain; its full sequence is Urease accessory protein UreE (200 aa).

The segment at 171-200 (HHGHAHPHPHDHDHQHGPGCAHGRHGHDHH) is disordered.

This sequence belongs to the UreE family.

The protein resides in the cytoplasm. In terms of biological role, involved in urease metallocenter assembly. Binds nickel. Probably functions as a nickel donor during metallocenter assembly. In Burkholderia vietnamiensis (strain G4 / LMG 22486) (Burkholderia cepacia (strain R1808)), this protein is Urease accessory protein UreE.